The chain runs to 385 residues: Cell division protein FtsZ (385 aa).

Residues 37 to 41 (GGGSN), 125 to 127 (GTG), Glu156, Lys160, and Asp204 contribute to the GTP site.

This sequence belongs to the FtsZ family. In terms of assembly, homodimer. Polymerizes to form a dynamic ring structure in a strictly GTP-dependent manner. Interacts directly with several other division proteins.

The protein localises to the cytoplasm. Functionally, essential cell division protein that forms a contractile ring structure (Z ring) at the future cell division site. The regulation of the ring assembly controls the timing and the location of cell division. One of the functions of the FtsZ ring is to recruit other cell division proteins to the septum to produce a new cell wall between the dividing cells. Binds GTP and shows GTPase activity. The chain is Cell division protein FtsZ from Helicobacter pylori (strain J99 / ATCC 700824) (Campylobacter pylori J99).